The chain runs to 454 residues: Serine/arginine (SR)-type shuttling mRNA binding protein HRB1 (454 aa).

Residues 1 to 141 are disordered; the sequence is MSDQERGSEN…SSGARGDYGP (141 aa). A compositionally biased stretch (basic residues) spans 14–24; it reads SRSRSRSPVRR. 2 stretches are compositionally biased toward basic and acidic residues: residues 25–38 and 50–113; these read RMSD…DNHL and KFAD…DYPR. Arg127 carries the omega-N-methylarginine modification. 2 consecutive RRM domains span residues 161–237 and 261–338; these read NSIF…QDNP and HEVI…SKES. A phosphoserine mark is found at Ser338, Ser343, and Ser355. The RRM 3 domain maps to 376–453; sequence RLIYCSNLPF…CDLDISYAKR (78 aa).

Post-translationally, methylated by HMT1.

The protein localises to the cytoplasm. The protein resides in the nucleus. It localises to the P-body. Its subcellular location is the stress granule. In terms of biological role, binds to intron-containing transcripts and is involved in quality control for the export of spliced mRNAs from the nucleus. Binds to pre-mRNAs until splicing is completed or until faulty mRNAs are degraded. On correctly spliced mRNAs, GBP2 and HRB1 recruit MEX67 to allow nuclear export. On faulty mRNAs, GBP2 and HRB1 associate with the TRAMP complex that guides those pre-mRNAs to the exosome for degradation. The chain is Serine/arginine (SR)-type shuttling mRNA binding protein HRB1 from Saccharomyces cerevisiae (strain ATCC 204508 / S288c) (Baker's yeast).